A 494-amino-acid polypeptide reads, in one-letter code: UDP-glucose 6-dehydrogenase (494 aa).

NAD(+) contacts are provided by residues G11 to G16, D36, R41, and V89 to T93. The disordered stretch occupies residues S88 to E110. K107 is subject to N6-acetyllysine. The allosteric switch region stretch occupies residues K129–R135. S130–V132 is an NAD(+) binding site. The active-site Proton donor/acceptor is E161. Substrate is bound by residues E161 to E165, K220 to N224, R260, and K267 to G273. E165 provides a ligand contact to NAD(+). Catalysis depends on K220, which acts as the Proton donor/acceptor. Catalysis depends on C276, which acts as the Nucleophile. Position 276 to 279 (C276 to K279) interacts with NAD(+). The important for formation of active hexamer structure stretch occupies residues S321–T325. Substrate is bound at residue F338 to K339. Residue R346 participates in NAD(+) binding. R442 contributes to the substrate binding site. Residues V466–V494 form a disordered region. A Phosphoserine modification is found at S476.

The protein belongs to the UDP-glucose/GDP-mannose dehydrogenase family. Homohexamer.

The enzyme catalyses UDP-alpha-D-glucose + 2 NAD(+) + H2O = UDP-alpha-D-glucuronate + 2 NADH + 3 H(+). The protein operates within nucleotide-sugar biosynthesis; UDP-alpha-D-glucuronate biosynthesis; UDP-alpha-D-glucuronate from UDP-alpha-D-glucose: step 1/1. Its activity is regulated as follows. UDP-alpha-D-xylose (UDX) acts as a feedback inhibitor. It binds at the same site as the substrate, but functions as allosteric inhibitor by triggering a conformation change that disrupts the active hexameric ring structure and gives rise to an inactive, horseshoe-shaped hexamer. Functionally, catalyzes the formation of UDP-alpha-D-glucuronate, a constituent of complex glycosaminoglycans. Required for the biosynthesis of chondroitin sulfate and heparan sulfate. Required for embryonic development via its role in the biosynthesis of glycosaminoglycans. Required for proper brain and neuronal development. The chain is UDP-glucose 6-dehydrogenase (UGDH) from Bos taurus (Bovine).